A 133-amino-acid chain; its full sequence is C-C motif chemokine 21a (133 aa).

Residues 1–23 (MAQMMTLSLLSLVLALCIPWTQG) form the signal peptide. 3 cysteine pairs are disulfide-bonded: C31/C57, C32/C75, and C103/C122. The segment at 86–133 (LMRRLDQPPAPGKQSPGCRKNRGTSKSGKKGKGSKGCKRTEQTQPSRG) is disordered. Residues 98–133 (KQSPGCRKNRGTSKSGKKGKGSKGCKRTEQTQPSRG) form a C-terminal basic extension region. Residues 104–122 (RKNRGTSKSGKKGKGSKGC) show a composition bias toward basic residues.

Belongs to the intercrine beta (chemokine CC) family. Binds to CCR7 and to CXCR3. Interacts with PDPN; relocalizes PDPN to the basolateral membrane. Interacts with GPR174. In terms of tissue distribution, expressed strongly in lung, spleen, thymus, peripheral and mesentric lymph nodes. Also expressed in the testis, kidney, liver, and heart.

It is found in the secreted. Functionally, inhibits hemopoiesis and stimulates chemotaxis. Chemotactic in vitro for thymocytes and activated T-cells, but not for B-cells, macrophages, or neutrophils. Potent mesangial cell chemoattractant. Shows preferential activity towards naive T-cells. May play a role in mediating homing of lymphocytes to secondary lymphoid organs. This is C-C motif chemokine 21a (Ccl21a) from Mus musculus (Mouse).